Here is a 235-residue protein sequence, read N- to C-terminus: Large ribosomal subunit protein uL1 (235 aa).

Belongs to the universal ribosomal protein uL1 family. In terms of assembly, part of the 50S ribosomal subunit.

In terms of biological role, binds directly to 23S rRNA. The L1 stalk is quite mobile in the ribosome, and is involved in E site tRNA release. Its function is as follows. Protein L1 is also a translational repressor protein, it controls the translation of the L11 operon by binding to its mRNA. The chain is Large ribosomal subunit protein uL1 from Synechococcus sp. (strain CC9605).